The sequence spans 362 residues: 3-dehydroquinate synthase (362 aa).

NAD(+)-binding positions include 71-76 (DGEQYK), 105-109 (GVVGD), 129-130 (TT), Lys142, Lys151, and 169-172 (CLKT). Zn(2+)-binding residues include Glu184, His247, and His264.

The protein belongs to the sugar phosphate cyclases superfamily. Dehydroquinate synthase family. Requires Co(2+) as cofactor. It depends on Zn(2+) as a cofactor. NAD(+) is required as a cofactor.

Its subcellular location is the cytoplasm. It catalyses the reaction 7-phospho-2-dehydro-3-deoxy-D-arabino-heptonate = 3-dehydroquinate + phosphate. It functions in the pathway metabolic intermediate biosynthesis; chorismate biosynthesis; chorismate from D-erythrose 4-phosphate and phosphoenolpyruvate: step 2/7. Functionally, catalyzes the conversion of 3-deoxy-D-arabino-heptulosonate 7-phosphate (DAHP) to dehydroquinate (DHQ). This Escherichia coli O81 (strain ED1a) protein is 3-dehydroquinate synthase.